Here is a 576-residue protein sequence, read N- to C-terminus: MAGUK p55 subfamily member 7 (576 aa).

2 consecutive L27 domains span residues 10–64 (SEMG…EDCA) and 65–122 (PTPV…YDPE). The region spanning 139-220 (IIRLVKNKEP…AITFKVVPGI (82 aa)) is the PDZ domain. The 71-residue stretch at 228–298 (EPKMFIKALF…PSKHFQERRL (71 aa)) folds into the SH3 domain. Residues 368-560 (HRLVVLVGPT…AFSELKQALK (193 aa)) form the Guanylate kinase-like domain.

Belongs to the MAGUK family.

Its subcellular location is the membrane. The protein localises to the cell junction. It is found in the tight junction. The protein resides in the adherens junction. Its function is as follows. Acts as an important adapter that promotes epithelial cell polarity and tight junction formation. Involved in the assembly of protein complexes at sites of cell-cell contact. The chain is MAGUK p55 subfamily member 7 (mpp7) from Danio rerio (Zebrafish).